Consider the following 392-residue polypeptide: Pannexin-3 (392 aa).

Residues Met-1 to Lys-39 are Cytoplasmic-facing. Residues Phe-40–Ser-60 form a helical membrane-spanning segment. Residues Gly-61 to Ser-113 are Extracellular-facing. The N-linked (GlcNAc...) asparagine glycan is linked to Asn-71. Residues Leu-114–Pro-134 traverse the membrane as a helical segment. Topologically, residues Ala-135–Leu-215 are cytoplasmic. The chain crosses the membrane as a helical span at residues Leu-216–Phe-236. The Extracellular segment spans residues Gln-237–Ser-267. Residues Val-268–Ile-288 form a helical membrane-spanning segment. Topologically, residues Tyr-289–Pro-392 are cytoplasmic.

The protein belongs to the pannexin family. As to quaternary structure, homoheptameric. In terms of tissue distribution, skin.

It localises to the cell membrane. The protein resides in the cell junction. It is found in the gap junction. The protein localises to the endoplasmic reticulum membrane. It carries out the reaction Ca(2+)(in) = Ca(2+)(out). It catalyses the reaction ATP(in) = ATP(out). In terms of biological role, regulator of osteoblast differentiation by functionning as a Ca(2+) channel in the endoplasmic reticulum which regulates calmodulin (CaM) pathways. Allows ATP release into the extracellular space and activation or purinergic receptors. The sequence is that of Pannexin-3 (Panx3) from Rattus norvegicus (Rat).